Consider the following 297-residue polypeptide: MSNWLVDKLIPSIMRSEVKKSSVPEGLWHKCPSCEAVLYRPELEKTLDVCPKCNHHMRIGARARIDIFLDKDGRAELGADLEPVDRLKFRDGKKYKDRLTAAQKQTGEKDALISMSGNLMGLPVVVSAFEFSFMGGSMGAIVGERFVRAANYALENRCPMICFSASGGARMQEALISLMQMAKTSAVLARLREEGIPFISVLTDPVYGGVSASLAMLGDVIVGEPKALIGFAGPRVIEQTVREKLPEGFQRSEFLLEHGAIDLIISRDELRPRLARLLAQMTGQPTPEAAKEVAAVA.

A CoA carboxyltransferase N-terminal domain is found at leucine 27–valine 296. Zn(2+) is bound by residues cysteine 31, cysteine 34, cysteine 50, and cysteine 53. Residues cysteine 31 to cysteine 53 form a C4-type zinc finger.

It belongs to the AccD/PCCB family. As to quaternary structure, acetyl-CoA carboxylase is a heterohexamer composed of biotin carboxyl carrier protein (AccB), biotin carboxylase (AccC) and two subunits each of ACCase subunit alpha (AccA) and ACCase subunit beta (AccD). Zn(2+) serves as cofactor.

Its subcellular location is the cytoplasm. The catalysed reaction is N(6)-carboxybiotinyl-L-lysyl-[protein] + acetyl-CoA = N(6)-biotinyl-L-lysyl-[protein] + malonyl-CoA. It participates in lipid metabolism; malonyl-CoA biosynthesis; malonyl-CoA from acetyl-CoA: step 1/1. In terms of biological role, component of the acetyl coenzyme A carboxylase (ACC) complex. Biotin carboxylase (BC) catalyzes the carboxylation of biotin on its carrier protein (BCCP) and then the CO(2) group is transferred by the transcarboxylase to acetyl-CoA to form malonyl-CoA. In Pseudomonas entomophila (strain L48), this protein is Acetyl-coenzyme A carboxylase carboxyl transferase subunit beta.